The primary structure comprises 155 residues: Small ribosomal subunit protein uS9 (155 aa).

It belongs to the universal ribosomal protein uS9 family.

This chain is Small ribosomal subunit protein uS9, found in Sinorhizobium medicae (strain WSM419) (Ensifer medicae).